The sequence spans 112 residues: SGSIRLKHIPRPSMKVCVFGDQHHLDEAAAGNIPAMSADDLKKLNKQKKLIKKLAKSYDAFIASESLIKQIPRILGPGLNKAGKFPSVVTHGESLQSKSDEIRATVKFQMKK.

It belongs to the universal ribosomal protein uL1 family.

The polypeptide is Large ribosomal subunit protein uL1 (rpl-10a) (Caenorhabditis remanei (Caenorhabditis vulgaris)).